A 572-amino-acid chain; its full sequence is Phosphoglucomutase-2 (572 aa).

Substrate-binding positions include Thr-23, Arg-27, 126–127 (SH), and Lys-140. Ser-126 (phosphoserine intermediate) is an active-site residue. Mg(2+) is bound at residue Ser-126. Asp-308, Asp-310, and Asp-312 together coordinate Mg(2+). Substrate is bound by residues 312-313 (DR), Thr-373, 392-394 (EES), Lys-405, and Arg-527.

It belongs to the phosphohexose mutase family. Mg(2+) is required as a cofactor. In terms of processing, phosphorylated via a calcium-dependent protein kinase.

It is found in the cytoplasm. The enzyme catalyses alpha-D-glucose 1-phosphate = alpha-D-glucose 6-phosphate. Functionally, may be involved in membrane fusion in exocytosis. The polypeptide is Phosphoglucomutase-2 (pp63-2) (Paramecium tetraurelia).